We begin with the raw amino-acid sequence, 590 residues long: DELLA protein GAI1 (590 aa).

A compositionally biased stretch (basic residues) spans 1 to 10 (MKREYHHPHH). The tract at residues 1–28 (MKREYHHPHHPTCSTSPTGKGKMWDADP) is disordered. Residues 35 to 39 (DELLA) carry the DELLA motif motif. The segment at 153–182 (HIEQPPQQPPAPPLYQRDNKRLKPTTSATA) is disordered. Residues 205-575 (VDSQETGIRL…RPLIATSAWQ (371 aa)) form the GRAS domain. Residues 212–266 (IRLVHTLMACAEAVQQENLKLAEALVKQIGFLAVSQAGAMRKVATYFAEGLARRI) are leucine repeat I (LRI). The VHIID stretch occupies residues 284-349 (QMHFYETCPY…GGPPSFRLTG (66 aa)). Positions 315–319 (VHVID) match the VHIID motif. The tract at residues 363 to 395 (EVGWKLAQLAETIHVEFEYRGFVANSLADLDAS) is leucine repeat II (LRII). The segment at 405 to 496 (VAVNSVFELH…EVYLGQQICN (92 aa)) is PFYRE. The LXXLL motif signature appears at 413–417 (LHSLL). The tract at residues 499-575 (ACEGPERVER…RPLIATSAWQ (77 aa)) is SAW.

Belongs to the GRAS family. DELLA subfamily. In terms of processing, phosphorylated. Ubiquitinated. Upon GA application it is ubiquitinated, leading to its subsequent degradation.

The protein localises to the nucleus. In terms of biological role, probable transcriptional regulator that acts as a repressor of the gibberellin (GA) signaling pathway. Probably acts by participating in large multiprotein complexes that repress transcription of GA-inducible genes. Upon GA application, it is degraded by the proteasome, allowing the GA signaling pathway. This Vitis vinifera (Grape) protein is DELLA protein GAI1 (GAI1).